Reading from the N-terminus, the 301-residue chain is Protein RESTRICTED TEV MOVEMENT 3 (301 aa).

The MATH domain maps to 6 to 134 (DKKITWTIKN…NGELKIVVEI (129 aa)). Positions 235–289 (KLDWLEKKLYEVSEKKENEEASETGLQEMEEELKDMKQKCLEMEALVEKEKAKVS) form a coiled coil.

Self-interacts. Interacts with RTM1.

In terms of biological role, required for the restriction of long-distance movement of the pathogenic tobacco etch virus (TEV) without causing a hypersensitive response or inducing systemic acquired resistance. This Arabidopsis thaliana (Mouse-ear cress) protein is Protein RESTRICTED TEV MOVEMENT 3 (RTM3).